Consider the following 249-residue polypeptide: Bax inhibitor 1 (249 aa).

6 helical membrane-spanning segments follow: residues 39–59, 65–85, 93–113, 119–139, 151–171, and 213–233; these read LVYL…YLHV, GMLT…VPVF, ILLA…KLAV, ILVT…CAAI, GLLS…SIFG, and HALT…VIML.

It belongs to the BI1 family. As to expression, ubiquitous.

The protein resides in the membrane. Its function is as follows. Suppressor of apoptosis. The sequence is that of Bax inhibitor 1 (BI1) from Oryza sativa subsp. japonica (Rice).